Consider the following 641-residue polypeptide: Putative phagocytic receptor 1a (641 aa).

Residues 1–23 (MKINKKQIVFFILFSIFLNHVNG) form the signal peptide. The Extracellular portion of the chain corresponds to 24–279 (IFYLPGMIPH…ESNDNSVHWF (256 aa)). Residues 280–300 (SILNSLMIVFILTVMVAMIII) form a helical membrane-spanning segment. The Cytoplasmic portion of the chain corresponds to 301–349 (RTLKKDIRRYTSIDTSEDRDSQEETGWKMIHGDVFRPPSHPMLLSVCIG). The helical transmembrane segment at 350 to 370 (SGVQIFSMTLITMIFAVLGFL) threads the bilayer. Residues 371-374 (SPAN) are Extracellular-facing. The chain crosses the membrane as a helical span at residues 375-395 (IGGLATALIVLFVLSAMFAGY). The Cytoplasmic portion of the chain corresponds to 396 to 413 (FSTRVFTIFKGRNWKKNT). The chain crosses the membrane as a helical span at residues 414–434 (IYTALSMPGIIFGIFFFVNMF). The Extracellular portion of the chain corresponds to 435 to 445 (LRGAKSSAAVP). A helical transmembrane segment spans residues 446–466 (FGTFASIIAMWFGISVPLVFL). At 467-502 (GSYFASKKPVPEDPVRTNQIPRQVPDQIWYMNPYLS) the chain is on the cytoplasmic side. The helical transmembrane segment at 503 to 523 (ILMGGILPFGAVFIELHFILT) threads the bilayer. The Extracellular segment spans residues 524–532 (SLWDNQFYY). A helical membrane pass occupies residues 533–553 (IFGFLFIVLMILIVTSAEISI). The Cytoplasmic segment spans residues 554-578 (VMCYFQLCAEDHHWWWRSFLTAGSS). A helical transmembrane segment spans residues 579–599 (SLYMFIYSVSFFRYLGITKFI). Residues 600–608 (SSLLDFSYS) lie on the Extracellular side of the membrane. A helical membrane pass occupies residues 609 to 629 (FIMSLAFAALTGTIGFYSCYF). Residues 630 to 641 (LVRKIYSSIHIN) are Cytoplasmic-facing.

Belongs to the nonaspanin (TM9SF) (TC 9.A.2) family.

The protein localises to the membrane. In terms of biological role, involved in adhesion, phagocytosis of hydrophilic particles and intracellular killing of bacteria. Associates with proteins harboring glycine-rich transmembrane domains and ensures their efficient localization to the cell surface. This chain is Putative phagocytic receptor 1a (phg1a), found in Dictyostelium discoideum (Social amoeba).